The chain runs to 155 residues: 6,7-dimethyl-8-ribityllumazine synthase (155 aa).

5-amino-6-(D-ribitylamino)uracil is bound by residues phenylalanine 22, 57 to 59, and 81 to 83; these read AYE and SVI. 86–87 contacts (2S)-2-hydroxy-3-oxobutyl phosphate; the sequence is GT. Residue histidine 88 is the Proton donor of the active site. 5-amino-6-(D-ribitylamino)uracil is bound at residue phenylalanine 113. Arginine 127 contributes to the (2S)-2-hydroxy-3-oxobutyl phosphate binding site.

It belongs to the DMRL synthase family. As to quaternary structure, forms an icosahedral capsid composed of 60 subunits, arranged as a dodecamer of pentamers.

The catalysed reaction is (2S)-2-hydroxy-3-oxobutyl phosphate + 5-amino-6-(D-ribitylamino)uracil = 6,7-dimethyl-8-(1-D-ribityl)lumazine + phosphate + 2 H2O + H(+). The protein operates within cofactor biosynthesis; riboflavin biosynthesis; riboflavin from 2-hydroxy-3-oxobutyl phosphate and 5-amino-6-(D-ribitylamino)uracil: step 1/2. Functionally, catalyzes the formation of 6,7-dimethyl-8-ribityllumazine by condensation of 5-amino-6-(D-ribitylamino)uracil with 3,4-dihydroxy-2-butanone 4-phosphate. This is the penultimate step in the biosynthesis of riboflavin. The polypeptide is 6,7-dimethyl-8-ribityllumazine synthase (Photobacterium phosphoreum).